A 776-amino-acid polypeptide reads, in one-letter code: Disintegrin and metalloproteinase domain-containing protein 28 (776 aa).

The signal sequence occupies residues 1-19 (MLQALLTVSLLLSPVPVSA). Positions 20–193 (IKELPGVKKY…IARPATRLVK (174 aa)) are excised as a propeptide. The Cysteine switch motif lies at 168–175 (STCGTDGV). Cys170 is a binding site for Zn(2+). Topologically, residues 194-666 (LNDGKVQKHE…CDDSSVVFYF (473 aa)) are extracellular. The 197-residue stretch at 204-400 (KYIEYYLVLD…KLSNCLFNAP (197 aa)) folds into the Peptidase M12B domain. Residues Asn268 and Asn275 are each glycosylated (N-linked (GlcNAc...) asparagine). Disulfide bonds link Cys315–Cys395, Cys355–Cys379, Cys357–Cys362, and Cys466–Cys486. His340 serves as a coordination point for Zn(2+). Glu341 is a catalytic residue. His344 and His350 together coordinate Zn(2+). Asn352 carries an N-linked (GlcNAc...) asparagine glycan. The Disintegrin domain maps to 408–494 (TPICGNQMVE…NCPDDRFRAN (87 aa)). Residues Asn558, Asn603, and Asn629 are each glycosylated (N-linked (GlcNAc...) asparagine). The region spanning 626 to 658 (KSTNCSSKCKGHAVCDHELQCQCEEGWSPPDCD) is the EGF-like domain. Disulfide bonds link Cys630–Cys640, Cys634–Cys646, and Cys648–Cys657. A helical membrane pass occupies residues 667–687 (SIVVAVLFPVAVISLVVAIVI). The Cytoplasmic segment spans residues 688-776 (RQQSSREKQK…SSFLDSNPKA (89 aa)). Over residues 691-701 (SSREKQKKDQR) the composition is skewed to basic and acidic residues. 2 disordered regions span residues 691-728 (SSRE…PQEM) and 746-776 (PASF…NPKA). Over residues 709–718 (RPHKQKRKPQ) the composition is skewed to basic residues.

The cofactor is Zn(2+). Pro-domain removal and maturation may be, at least in part, autocatalytic. In terms of tissue distribution, expressed at high levels in epididymis and at lower levels in lung.

The protein localises to the membrane. Functionally, may play a role in the adhesive and proteolytic events that occur during lymphocyte emigration or may function in ectodomain shedding of lymphocyte surface target proteins, such as FASL and CD40L. May be involved in sperm maturation. This Macaca fascicularis (Crab-eating macaque) protein is Disintegrin and metalloproteinase domain-containing protein 28 (ADAM28).